The sequence spans 227 residues: Phosphoribosylformylglycinamidine synthase subunit PurQ (227 aa).

The Glutamine amidotransferase type-1 domain maps to phenylalanine 3–valine 225. Cysteine 86 (nucleophile) is an active-site residue. Residues histidine 194 and glutamate 196 contribute to the active site.

In terms of assembly, part of the FGAM synthase complex composed of 1 PurL, 1 PurQ and 2 PurS subunits.

It is found in the cytoplasm. It carries out the reaction N(2)-formyl-N(1)-(5-phospho-beta-D-ribosyl)glycinamide + L-glutamine + ATP + H2O = 2-formamido-N(1)-(5-O-phospho-beta-D-ribosyl)acetamidine + L-glutamate + ADP + phosphate + H(+). The catalysed reaction is L-glutamine + H2O = L-glutamate + NH4(+). The protein operates within purine metabolism; IMP biosynthesis via de novo pathway; 5-amino-1-(5-phospho-D-ribosyl)imidazole from N(2)-formyl-N(1)-(5-phospho-D-ribosyl)glycinamide: step 1/2. Its function is as follows. Part of the phosphoribosylformylglycinamidine synthase complex involved in the purines biosynthetic pathway. Catalyzes the ATP-dependent conversion of formylglycinamide ribonucleotide (FGAR) and glutamine to yield formylglycinamidine ribonucleotide (FGAM) and glutamate. The FGAM synthase complex is composed of three subunits. PurQ produces an ammonia molecule by converting glutamine to glutamate. PurL transfers the ammonia molecule to FGAR to form FGAM in an ATP-dependent manner. PurS interacts with PurQ and PurL and is thought to assist in the transfer of the ammonia molecule from PurQ to PurL. The chain is Phosphoribosylformylglycinamidine synthase subunit PurQ from Bacillus cereus (strain 03BB102).